The primary structure comprises 286 residues: Polyamine aminopropyltransferase 1 (286 aa).

The 235-residue stretch at 1–235 (MSDYQETLYQ…GAMTFAWGST (235 aa)) folds into the PABS domain. Gln30 lines the S-methyl-5'-thioadenosine pocket. The spermidine site is built by His61 and Asp85. Residues Glu105 and 137–138 (DG) each bind S-methyl-5'-thioadenosine. Asp155 serves as the catalytic Proton acceptor. Spermidine is bound at residue 155 to 158 (DSTD). Pro162 contributes to the S-methyl-5'-thioadenosine binding site.

It belongs to the spermidine/spermine synthase family. Homodimer or homotetramer.

It is found in the cytoplasm. It catalyses the reaction S-adenosyl 3-(methylsulfanyl)propylamine + putrescine = S-methyl-5'-thioadenosine + spermidine + H(+). Its pathway is amine and polyamine biosynthesis; spermidine biosynthesis; spermidine from putrescine: step 1/1. In terms of biological role, catalyzes the irreversible transfer of a propylamine group from the amino donor S-adenosylmethioninamine (decarboxy-AdoMet) to putrescine (1,4-diaminobutane) to yield spermidine. This Pseudomonas aeruginosa (strain ATCC 15692 / DSM 22644 / CIP 104116 / JCM 14847 / LMG 12228 / 1C / PRS 101 / PAO1) protein is Polyamine aminopropyltransferase 1.